Reading from the N-terminus, the 466-residue chain is Purple acid phosphatase 6 (466 aa).

A signal peptide spans 1–20 (MKNLVIFAFLFLSITTVING). Asn88 is a glycosylation site (N-linked (GlcNAc...) asparagine). Position 164 (Asp164) interacts with Fe cation. A glycan (N-linked (GlcNAc...) asparagine) is linked at Asn172. The Fe cation site is built by Asp192 and Tyr195. Asp192 is a binding site for Zn(2+). Zn(2+) contacts are provided by Asn229 and His314. Residue Asn229 participates in substrate binding. Catalysis depends on His324, which acts as the Proton donor. A Zn(2+)-binding site is contributed by His351. A substrate-binding site is contributed by 351–353 (HVH). His353 is a Fe cation binding site. N-linked (GlcNAc...) asparagine glycosylation is found at Asn367 and Asn424.

This sequence belongs to the metallophosphoesterase superfamily. Purple acid phosphatase family. Homodimer. The cofactor is Fe cation. Zn(2+) serves as cofactor. In terms of tissue distribution, specifically expressed in flowers.

The protein localises to the secreted. It carries out the reaction a phosphate monoester + H2O = an alcohol + phosphate. In Arabidopsis thaliana (Mouse-ear cress), this protein is Purple acid phosphatase 6 (PAP6).